Reading from the N-terminus, the 241-residue chain is MNKTTLLYTGKAKQVYATDDPDVLWMAYTNQATALNGEKKAQIAHKGELNRAISTLLFKELTAAGIPTHYLDSPDSTTMIVKKAAMLPLEVVVRNYASGHFVTKFNVKPMMKLDPPIHEYYYKSDELGDPFMNEAQIFALHEATPEQLKQVHALTDRINTYLTQRFAAIGITLVDFKLEYGTLKDGTLVLADELSPDNFRLVDQQTGASLDKDVFRQNRGPLTPVYEEVLSRLQEKGAAHV.

Belongs to the SAICAR synthetase family.

The catalysed reaction is 5-amino-1-(5-phospho-D-ribosyl)imidazole-4-carboxylate + L-aspartate + ATP = (2S)-2-[5-amino-1-(5-phospho-beta-D-ribosyl)imidazole-4-carboxamido]succinate + ADP + phosphate + 2 H(+). It participates in purine metabolism; IMP biosynthesis via de novo pathway; 5-amino-1-(5-phospho-D-ribosyl)imidazole-4-carboxamide from 5-amino-1-(5-phospho-D-ribosyl)imidazole-4-carboxylate: step 1/2. The protein is Phosphoribosylaminoimidazole-succinocarboxamide synthase of Lacticaseibacillus paracasei (strain ATCC 334 / BCRC 17002 / CCUG 31169 / CIP 107868 / KCTC 3260 / NRRL B-441) (Lactobacillus paracasei).